The primary structure comprises 344 residues: Nuclear distribution protein nudE-like 1-B (344 aa).

Positions 26–189 (YKKSCHDAQE…ELAVRERTSD (164 aa)) form a coiled coil.

It belongs to the nudE family. Post-translationally, phosphorylated in mitosis.

Its subcellular location is the cytoplasm. The protein localises to the cytoskeleton. It localises to the microtubule organizing center. It is found in the centrosome. The protein resides in the spindle. In terms of biological role, required for organization of the cellular microtubule array and microtubule anchoring at the centrosome. Positively regulates the activity of the minus-end directed microtubule motor protein dynein. May enhance dynein-mediated microtubule sliding by targeting dynein to the microtubule plus end. This is Nuclear distribution protein nudE-like 1-B (ndel1b) from Danio rerio (Zebrafish).